A 428-amino-acid polypeptide reads, in one-letter code: ATP phosphoribosyltransferase regulatory subunit (428 aa).

The protein belongs to the class-II aminoacyl-tRNA synthetase family. HisZ subfamily. As to quaternary structure, heteromultimer composed of HisG and HisZ subunits.

The protein resides in the cytoplasm. Its pathway is amino-acid biosynthesis; L-histidine biosynthesis; L-histidine from 5-phospho-alpha-D-ribose 1-diphosphate: step 1/9. Its function is as follows. Required for the first step of histidine biosynthesis. May allow the feedback regulation of ATP phosphoribosyltransferase activity by histidine. This chain is ATP phosphoribosyltransferase regulatory subunit, found in Syntrophotalea carbinolica (strain DSM 2380 / NBRC 103641 / GraBd1) (Pelobacter carbinolicus).